The primary structure comprises 347 residues: MSVMFDPDTAIYPFPPKPTPLSIDEKAYYREKIKRLLKERNAVMVAHYYTDPEIQQLAEETGGCISDSLEMARFGAKHPASTLLVAGVRFMGETAKILSPEKTILMPTLQAECSLDLGCPVEEFNAFCDAHPDRTVVVYANTSAAVKARADWVVTSSIAVELIDHLDSLGEKIIWAPDKHLGRYVQKQTGGDILCWQGACIVHDEFKTQALTRLQEEYPDAAILVHPESPQAIVDMADAVGSTSQLIAAAKTLPHQRLIVATDRGIFYKMQQAVPDKELLEAPTAGEGATCRSCAHCPWMAMNGLQSIAEALEQEGSNHEVHVDERLRERALVPLNRMLDFAATLRG.

Iminosuccinate-binding residues include H47 and S68. Position 113 (C113) interacts with [4Fe-4S] cluster. Iminosuccinate contacts are provided by residues 139-141 (YAN) and S156. C200 contributes to the [4Fe-4S] cluster binding site. Iminosuccinate is bound by residues 226-228 (HPE) and T243. Position 297 (C297) interacts with [4Fe-4S] cluster.

It belongs to the quinolinate synthase family. Type 1 subfamily. [4Fe-4S] cluster serves as cofactor.

It localises to the cytoplasm. The enzyme catalyses iminosuccinate + dihydroxyacetone phosphate = quinolinate + phosphate + 2 H2O + H(+). Its pathway is cofactor biosynthesis; NAD(+) biosynthesis; quinolinate from iminoaspartate: step 1/1. Functionally, catalyzes the condensation of iminoaspartate with dihydroxyacetone phosphate to form quinolinate. This is Quinolinate synthase from Escherichia coli O139:H28 (strain E24377A / ETEC).